A 238-amino-acid polypeptide reads, in one-letter code: Sugar fermentation stimulation protein homolog (238 aa).

Belongs to the SfsA family.

The chain is Sugar fermentation stimulation protein homolog from Shewanella denitrificans (strain OS217 / ATCC BAA-1090 / DSM 15013).